Reading from the N-terminus, the 115-residue chain is Pre-histone-like nucleoprotein (115 aa).

A propeptide spanning residues 2–23 (PILISPSDNTGWGLGKLRIRAT) is cleaved from the precursor. Residues 85-99 (GRRTARSARRRSARK) show a composition bias toward basic residues. Positions 85–115 (GRRTARSARRRSARKSRSEKTGPRIRYTRRI) are disordered. Positions 114–115 (RI) match the Nuclear localization signal motif.

The protein belongs to the adenoviridae histone-like nucleoprotein family. As to quaternary structure, interacts with the core-capsid bridging protein; this interaction bridges the virus core to the capsid. Interacts with host NPM1; this interaction might play a role in placing the pre-histone-like nucleoprotein on the viral DNA or regulating viral gene expression. Interacts with host HMGB1; this interaction inhibits host immune response. Cleaved near the N-terminus by the viral protease during virion maturation to form the mature protein.

Its subcellular location is the virion. It localises to the host nucleus. The protein localises to the host nucleolus. Functionally, plays a role in the inhibition of host immune response within the nucleus. Interacts with cellular nucleosomes and immobilizes the host immune danger signal HMGB1 on chromatin. In turn, prevents HMGB1 release out of the cell and thus decreases inflammation. Also plays a role in the wrapping and condensation of the viral DNA. May also promote viral genome import into the nucleus. In Pantherophis guttatus (Corn snake), this protein is Pre-histone-like nucleoprotein.